Here is a 103-residue protein sequence, read N- to C-terminus: MADKEKKKKESILDLSKYIDKTIRVKFQGGREASGILKGFDPLLNLVLDGTIEYMRDPDDQYKLTEDTRQLGLVVCRGTSVVLICPQDGMEAIPNPFIQQQDA.

An N-acetylalanine modification is found at Ala-2. One can recognise a Sm domain in the interval 10-90 (ESILDLSKYI…VVLICPQDGM (81 aa)).

The protein belongs to the snRNP Sm proteins family. As to quaternary structure, component of the precatalytic spliceosome (spliceosome B complex). Component of the U4/U6-U5 tri-snRNP complex, a building block of the precatalytic spliceosome (spliceosome B complex). The U4/U6-U5 tri-snRNP complex is composed of the U4, U6 and U5 snRNAs and at least PRPF3, PRPF4, PRPF6, PRPF8, PRPF31, SNRNP200, TXNL4A, SNRNP40, SNRPB, SNRPD1, SNRPD2, SNRPD3, SNRPE, SNRPF, SNRPG, DDX23, CD2BP2, PPIH, SNU13, EFTUD2, SART1 and USP39, plus LSM2, LSM3, LSM4, LSM5, LSM6, LSM7 and LSM8. LSM2, LSM3, LSM4, LSM5, LSM6, LSM7 and LSM8 form a heptameric, ring-shaped subcomplex (the LSM2-8 complex) that is part of the U4/U6-U5 tri-snRNP complex and the precatalytic spliceosome. Interacts with TACC1.

Its subcellular location is the nucleus. Plays a role in pre-mRNA splicing as component of the U4/U6-U5 tri-snRNP complex that is involved in spliceosome assembly, and as component of the precatalytic spliceosome (spliceosome B complex). The heptameric LSM2-8 complex binds specifically to the 3'-terminal U-tract of U6 snRNA. The protein is U6 snRNA-associated Sm-like protein LSm7 (LSM7) of Homo sapiens (Human).